Here is a 220-residue protein sequence, read N- to C-terminus: Kinetochore protein Spc25 (220 aa).

A coiled-coil region spans residues I41–L119.

Belongs to the SPC25 family. As to quaternary structure, component of the Ndc80 complex, which is composed of Ndc80, Nuf2 and Spc25.

The protein resides in the nucleus. The protein localises to the chromosome. Its subcellular location is the centromere. It localises to the kinetochore. Its function is as follows. Acts as a component of the essential kinetochore-associated Ndc80 complex, which is required for chromosome segregation and spindle checkpoint activity during meiosis and mitosis. Required for kinetochore integrity and the organization of stable microtubule binding sites in the outer plate of the kinetochore. Participates in SAC signaling that responds specifically to disruptions in spindle microtubule dynamics. The NDC80 complex synergistically enhances the affinity of the SKA1 complex for microtubules and may allow the NDC80 complex to track depolymerizing microtubules. The sequence is that of Kinetochore protein Spc25 from Drosophila erecta (Fruit fly).